The primary structure comprises 385 residues: Cytochrome b (385 aa).

The next 4 membrane-spanning stretches (helical) occupy residues 32–52 (FGALAAFCLGIQIVTGIFLAM), 76–98 (WLIRYIHANGASFFFICVYIHVF), 113–133 (LWNLGVTILIVMILTAFLGYV), and 179–199 (FFSLHYLLPFVIALLSLIHVA). The heme b site is built by H82 and H96. H183 and H197 together coordinate heme b. H202 contacts a ubiquinone. Helical transmembrane passes span 226–246 (FIFKDLLGIIFFLIVFCYAVF), 290–310 (LGGVITLGLALIVLFLLPFIT), 322–342 (SKTILFWSFFSVCVLLGWIGF), and 349–369 (YLMLGQMLTVLYFFYFFSLAV).

The protein belongs to the cytochrome b family. The main subunits of complex b-c1 are: cytochrome b, cytochrome c1 and the Rieske protein. Heme b serves as cofactor.

The protein resides in the mitochondrion inner membrane. Component of the ubiquinol-cytochrome c reductase complex (complex III or cytochrome b-c1 complex) that is part of the mitochondrial respiratory chain. The b-c1 complex mediates electron transfer from ubiquinol to cytochrome c. Contributes to the generation of a proton gradient across the mitochondrial membrane that is then used for ATP synthesis. This Acanthamoeba castellanii (Amoeba) protein is Cytochrome b (MT-CYB).